The sequence spans 172 residues: Crossover junction endodeoxyribonuclease RuvC (172 aa).

Residues Asp12, Glu71, and Asp143 contribute to the active site. The Mg(2+) site is built by Asp12, Glu71, and Asp143.

This sequence belongs to the RuvC family. As to quaternary structure, homodimer which binds Holliday junction (HJ) DNA. The HJ becomes 2-fold symmetrical on binding to RuvC with unstacked arms; it has a different conformation from HJ DNA in complex with RuvA. In the full resolvosome a probable DNA-RuvA(4)-RuvB(12)-RuvC(2) complex forms which resolves the HJ. The cofactor is Mg(2+).

Its subcellular location is the cytoplasm. The catalysed reaction is Endonucleolytic cleavage at a junction such as a reciprocal single-stranded crossover between two homologous DNA duplexes (Holliday junction).. Functionally, the RuvA-RuvB-RuvC complex processes Holliday junction (HJ) DNA during genetic recombination and DNA repair. Endonuclease that resolves HJ intermediates. Cleaves cruciform DNA by making single-stranded nicks across the HJ at symmetrical positions within the homologous arms, yielding a 5'-phosphate and a 3'-hydroxyl group; requires a central core of homology in the junction. The consensus cleavage sequence is 5'-(A/T)TT(C/G)-3'. Cleavage occurs on the 3'-side of the TT dinucleotide at the point of strand exchange. HJ branch migration catalyzed by RuvA-RuvB allows RuvC to scan DNA until it finds its consensus sequence, where it cleaves and resolves the cruciform DNA. The polypeptide is Crossover junction endodeoxyribonuclease RuvC (Coxiella burnetii (strain CbuG_Q212) (Coxiella burnetii (strain Q212))).